A 59-amino-acid polypeptide reads, in one-letter code: VAFATSFTVCWTPYYVLGIWYWFDPEMLNRVSDPVNHFFFLFAFLNPCFDPLIYGYFSL.

At 1 to 2 (VA) the chain is on the cytoplasmic side. A helical membrane pass occupies residues 3–23 (FATSFTVCWTPYYVLGIWYWF). At 24–37 (DPEMLNRVSDPVNH) the chain is on the extracellular side. The helical transmembrane segment at 38–58 (FFFLFAFLNPCFDPLIYGYFS) threads the bilayer. Residue Leu-59 is a topological domain, cytoplasmic.

This sequence belongs to the G-protein coupled receptor 1 family.

It localises to the cell membrane. Receptor for gonadotropin releasing hormone (GnRH) that mediates the action of GnRH to stimulate the secretion of the gonadotropic hormones luteinizing hormone (LH) and follicle-stimulating hormone (FSH). This receptor mediates its action by association with G-proteins that activate a phosphatidylinositol-calcium second messenger system. The chain is Gonadotropin-releasing hormone receptor (GNRHR) from Macaca mulatta (Rhesus macaque).